A 599-amino-acid chain; its full sequence is Elongation factor 4 (599 aa).

Residues 2–184 enclose the tr-type G domain; sequence KNIRNFSIIA…RLVRDIPPPE (183 aa). Residues 14–19 and 131–134 each bind GTP; these read DHGKST and NKID.

It belongs to the TRAFAC class translation factor GTPase superfamily. Classic translation factor GTPase family. LepA subfamily.

Its subcellular location is the cell inner membrane. It catalyses the reaction GTP + H2O = GDP + phosphate + H(+). Its function is as follows. Required for accurate and efficient protein synthesis under certain stress conditions. May act as a fidelity factor of the translation reaction, by catalyzing a one-codon backward translocation of tRNAs on improperly translocated ribosomes. Back-translocation proceeds from a post-translocation (POST) complex to a pre-translocation (PRE) complex, thus giving elongation factor G a second chance to translocate the tRNAs correctly. Binds to ribosomes in a GTP-dependent manner. The chain is Elongation factor 4 from Klebsiella pneumoniae (strain 342).